Consider the following 230-residue polypeptide: UPF0502 protein Patl_1161 (230 aa).

It belongs to the UPF0502 family.

This is UPF0502 protein Patl_1161 from Pseudoalteromonas atlantica (strain T6c / ATCC BAA-1087).